A 1310-amino-acid polypeptide reads, in one-letter code: PAN2-PAN3 deadenylation complex catalytic subunit pan2 (1310 aa).

WD repeat units follow at residues 22–61 (YHAGPASTIAFDNQDELLWIGTQKGFAGSFIGRELKRFTA), 67–105 (ETDGPLRQFLFVDKGVIFLGSRSVYMAARSGVPIWSIRH), 106–144 (ESMQDLRAMSFTSKGTSEILVAGWQNKMLVIDVNKGEVV), and 145–184 (KELPTQDQYSFLKMSRYICAATNKGTVNILDPITFTIKKQ). Residues 318–463 (QFTEIGIPPR…NNDHWSLRPE (146 aa)) are linker. The region spanning 463-850 (EAPPEYRICE…MPVVVMFQVK (388 aa)) is the USP domain. Zn(2+)-binding residues include H525, C530, C535, C538, C645, C648, C700, and C703. One can recognise an Exonuclease domain in the interval 897–1070 (IAIDTEFIRL…EDAQTALKLY (174 aa)). A divalent metal cation-binding residues include D900, E902, D1009, and D1062. A disordered region spans residues 1121–1169 (TPPVPAPGTTEGSFEISNSSTATTGGSALSATGGMGSASASSSMPSTPV). A compositionally biased stretch (low complexity) spans 1139 to 1168 (SSTATTGGSALSATGGMGSASASSSMPSTP).

Belongs to the peptidase C19 family. PAN2 subfamily. As to quaternary structure, forms a heterotrimer with an asymmetric homodimer of the regulatory subunit par-2/pan3 to form the poly(A)-nuclease (PAN) deadenylation complex. It depends on a divalent metal cation as a cofactor.

Its subcellular location is the cytoplasm. It catalyses the reaction Exonucleolytic cleavage of poly(A) to 5'-AMP.. Positively regulated by the regulatory subunit par-2/pan3. In terms of biological role, catalytic subunit of the poly(A)-nuclease (PAN) deadenylation complex, one of two cytoplasmic mRNA deadenylases involved in mRNA turnover. PAN specifically shortens poly(A) tails of RNA and the activity is stimulated by poly(A)-binding protein pabp-1. PAN deadenylation is followed by rapid degradation of the shortened mRNA tails by the CCR4-NOT complex. Deadenylated mRNAs are then degraded by two alternative mechanisms, namely exosome-mediated 3'-5' exonucleolytic degradation, or deadenylation-dependent mRNA decaping and subsequent 5'-3' exonucleolytic degradation by rgb-30/xrn1. May also be involved in post-transcriptional maturation of mRNA poly(A) tails. The chain is PAN2-PAN3 deadenylation complex catalytic subunit pan2 (par-1) from Neurospora crassa (strain ATCC 24698 / 74-OR23-1A / CBS 708.71 / DSM 1257 / FGSC 987).